A 385-amino-acid polypeptide reads, in one-letter code: Putative F-box protein At1g47765 (385 aa).

The span at 1–19 shows a compositional bias: basic residues; sequence MEQQKQKKRKVVSKSKRTQ. The disordered stretch occupies residues 1-24; the sequence is MEQQKQKKRKVVSKSKRTQSKSAS. Residues 20-69 enclose the F-box domain; sequence SKSASSLPLDLTSEILLRLPEKSIARFRCVSKLWLSITTDPYFINLFETR.

The chain is Putative F-box protein At1g47765 from Arabidopsis thaliana (Mouse-ear cress).